Consider the following 611-residue polypeptide: Lanthanide-dependent methanol dehydrogenase (611 aa).

Positions 1-34 (MTVKLKKPKKYAVAKNATLLAAFGLIGSLSLAKA) are cleaved as a signal peptide. A disulfide bridge connects residues Cys138 and Cys139. Pyrroloquinoline quinone-binding residues include Arg144, Thr188, Ser203, Gly204, and Gly205. A Ce(3+)-binding site is contributed by Glu206. Glu206 lines the Eu(3+) pocket. The pyrroloquinoline quinone site is built by Thr270 and Trp272. Ce(3+)-binding residues include Asn290, Asp333, and Asp335. Residues Asn290, Asp333, and Asp335 each coordinate Eu(3+). Arg360 is a binding site for pyrroloquinoline quinone. A disulfide bridge connects residues Cys414 and Cys443. Pyrroloquinoline quinone-binding residues include Trp501 and Trp566.

It belongs to the bacterial PQQ dehydrogenase family. Homodimer. The cofactor is Ce(3+). It depends on La(3+) as a cofactor. Nd(3+) is required as a cofactor. Requires Pr(3+) as cofactor. Eu(3+) serves as cofactor. The cofactor is pyrroloquinoline quinone.

It is found in the periplasm. It catalyses the reaction 2 Fe(III)-[cytochrome cL] + methanol = 2 Fe(II)-[cytochrome cL] + formaldehyde + 2 H(+). The enzyme catalyses 4 Fe(III)-[cytochrome cL] + methanol + H2O = 4 Fe(II)-[cytochrome cL] + formate + 5 H(+). It carries out the reaction 2 Fe(III)-[cytochrome cL] + a primary alcohol = 2 Fe(II)-[cytochrome cL] + an aldehyde + 2 H(+). It participates in one-carbon metabolism; methanol degradation. Its function is as follows. Catalyzes the oxidation of methanol to formaldehyde or formate in the presence of lanthanides (Ln). Is a key enzyme in methane/methanol metabolism, allowing M.fumariolicum to grow on methane as the sole carbon and energy source. Can also act on other primary alcohols in vitro, such as ethanol, 1-propanol, 1-butanol, and 1-hexanol, but is not able to oxidize secondary alcohols and acetaldehyde. Uses a specific cytochrome cL, encoded by the adjacent gene in the locus, as electron acceptor. In Methylacidiphilum fumariolicum (strain SolV), this protein is Lanthanide-dependent methanol dehydrogenase.